Consider the following 1755-residue polypeptide: Transposon Ty1-MR2 Gag-Pol polyprotein (1755 aa).

3 stretches are compositionally biased toward polar residues: residues 1–10, 48–60, and 127–152; these read MESQQLSNYP, TKANSQQTTTPAS, and QSQFPQYPSSVGTPLSTPSPESGNTF. 3 disordered regions span residues 1–93, 126–173, and 352–421; these read MESQ…MMTQ, PQSQ…RPPP, and GSRN…SKST. Low complexity predominate over residues 153-165; that stretch reads TDSSSADSDMTST. The interval 299 to 401 is RNA-binding; it reads NNGIHINNKV…NSKSKTARAH (103 aa). Residues 402-418 are compositionally biased toward low complexity; the sequence is NVSTSNNSPSTDNDSIS. Serine 416 is modified (phosphoserine). Aspartate 461 functions as the For protease activity; shared with dimeric partner in the catalytic mechanism. Positions 583–640 are integrase-type zinc finger-like; the sequence is NVHTSESTRKYPYPFIHRMLAHANAQTIRYSLKNNTITYFNESDVDWSSAIDYQCPDC. Residues 660–835 enclose the Integrase catalytic domain; that stretch reads NSYEPFQYLH…AGLDISTLLP (176 aa). Residues aspartate 671 and aspartate 736 each coordinate Mg(2+). 3 disordered regions span residues 956–1087, 1092–1111, and 1130–1186; these read SKAV…ETEK, RSPSIDASPPENNSSHNIVP, and DLPL…EDNE. Low complexity predominate over residues 960–969; that stretch reads SPTDSTPPST. The segment covering 1005–1015 has biased composition (polar residues); it reads STPQISNIEST. Residues 1038–1053 are compositionally biased toward basic and acidic residues; sequence ESSHASKSKDFRHSDS. Composition is skewed to polar residues over residues 1054 to 1082 and 1101 to 1111; these read YSENETNHTNVPISSTGGTNNKTVPQISD and PENNSSHNIVP. The short motif at 1178-1212 is the Bipartite nuclear localization signal element; sequence KKRSLEDNETEIKVSRDTWNTKNMRSLEPPRSKKR. The Reverse transcriptase Ty1/copia-type domain occupies 1338–1476; the sequence is NNYYITQLDI…DILGLEIKYQ (139 aa). Mg(2+)-binding residues include aspartate 1346, aspartate 1427, aspartate 1428, aspartate 1610, glutamate 1652, and aspartate 1685. Positions 1610–1752 constitute an RNase H Ty1/copia-type domain; the sequence is DASYGNQPYY…IKTFKLLTNK (143 aa).

In terms of assembly, the capsid protein forms a homotrimer, from which the VLPs are assembled. The protease is a homodimer, whose active site consists of two apposed aspartic acid residues. Initially, virus-like particles (VLPs) are composed of the structural unprocessed proteins Gag and Gag-Pol, and also contain the host initiator methionine tRNA (tRNA(i)-Met) which serves as a primer for minus-strand DNA synthesis, and a dimer of genomic Ty RNA. Processing of the polyproteins occurs within the particle and proceeds by an ordered pathway, called maturation. First, the protease (PR) is released by autocatalytic cleavage of the Gag-Pol polyprotein yielding capsid protein p45 and a Pol-p154 precursor protein. This cleavage is a prerequisite for subsequent processing of Pol-p154 at the remaining sites to release the mature structural and catalytic proteins. Maturation takes place prior to the RT reaction and is required to produce transposition-competent VLPs.

The protein resides in the cytoplasm. It localises to the nucleus. It catalyses the reaction DNA(n) + a 2'-deoxyribonucleoside 5'-triphosphate = DNA(n+1) + diphosphate. It carries out the reaction Endonucleolytic cleavage to 5'-phosphomonoester.. Its function is as follows. Capsid protein (CA) is the structural component of the virus-like particle (VLP), forming the shell that encapsulates the retrotransposons dimeric RNA genome. The particles are assembled from trimer-clustered units and there are holes in the capsid shells that allow for the diffusion of macromolecules. CA also has nucleocapsid-like chaperone activity, promoting primer tRNA(i)-Met annealing to the multipartite primer-binding site (PBS), dimerization of Ty1 RNA and initiation of reverse transcription. In terms of biological role, the aspartyl protease (PR) mediates the proteolytic cleavages of the Gag and Gag-Pol polyproteins after assembly of the VLP. Reverse transcriptase/ribonuclease H (RT) is a multifunctional enzyme that catalyzes the conversion of the retro-elements RNA genome into dsDNA within the VLP. The enzyme displays a DNA polymerase activity that can copy either DNA or RNA templates, and a ribonuclease H (RNase H) activity that cleaves the RNA strand of RNA-DNA heteroduplexes during plus-strand synthesis and hydrolyzes RNA primers. The conversion leads to a linear dsDNA copy of the retrotransposon that includes long terminal repeats (LTRs) at both ends. Functionally, integrase (IN) targets the VLP to the nucleus, where a subparticle preintegration complex (PIC) containing at least integrase and the newly synthesized dsDNA copy of the retrotransposon must transit the nuclear membrane. Once in the nucleus, integrase performs the integration of the dsDNA into the host genome. This Saccharomyces cerevisiae (strain ATCC 204508 / S288c) (Baker's yeast) protein is Transposon Ty1-MR2 Gag-Pol polyprotein (TY1B-MR2).